We begin with the raw amino-acid sequence, 94 residues long: MTVLTDEQVDAALLDLNDWKHTDGALCRSIKFPTFLAGIDAVCRVAEHAETKDHHPDIDIRYRTVTFILVTHYADGITKKDITMARDIDRLIGD.

It belongs to the pterin-4-alpha-carbinolamine dehydratase family.

It catalyses the reaction (4aS,6R)-4a-hydroxy-L-erythro-5,6,7,8-tetrahydrobiopterin = (6R)-L-erythro-6,7-dihydrobiopterin + H2O. This Mycobacterium leprae (strain Br4923) protein is Putative pterin-4-alpha-carbinolamine dehydratase.